We begin with the raw amino-acid sequence, 190 residues long: RNA pyrophosphohydrolase (190 aa).

In terms of domain architecture, Nudix hydrolase spans 6–149; that stretch reads GYRPNVGIVL…KRGVYARALC (144 aa). A Nudix box motif is present at residues 38 to 59; the sequence is GGMHSDETPVEAMYRELNEEIG.

Belongs to the Nudix hydrolase family. RppH subfamily. It depends on a divalent metal cation as a cofactor.

Its function is as follows. Accelerates the degradation of transcripts by removing pyrophosphate from the 5'-end of triphosphorylated RNA, leading to a more labile monophosphorylated state that can stimulate subsequent ribonuclease cleavage. This chain is RNA pyrophosphohydrolase, found in Xylella fastidiosa (strain M12).